A 462-amino-acid chain; its full sequence is Histidine--tRNA ligase (462 aa).

Belongs to the class-II aminoacyl-tRNA synthetase family. In terms of assembly, homodimer.

Its subcellular location is the cytoplasm. It catalyses the reaction tRNA(His) + L-histidine + ATP = L-histidyl-tRNA(His) + AMP + diphosphate + H(+). In Nostoc sp. (strain PCC 7120 / SAG 25.82 / UTEX 2576), this protein is Histidine--tRNA ligase (hisS).